The chain runs to 140 residues: Actin-depolymerizing factor 10 (140 aa).

Phosphoserine is present on serine 6. The region spanning 7 to 139 (GMHVSDECKL…SLDIIKGRVN (133 aa)) is the ADF-H domain.

It belongs to the actin-binding proteins ADF family.

The protein resides in the cytoplasm. It localises to the cytoskeleton. Its function is as follows. Actin-depolymerizing protein. Severs actin filaments (F-actin) and binds to actin monomers. In Arabidopsis thaliana (Mouse-ear cress), this protein is Actin-depolymerizing factor 10 (ADF10).